Consider the following 513-residue polypeptide: Putative ribose/galactose/methyl galactoside import ATP-binding protein 3 (513 aa).

ABC transporter domains lie at Ile15 to Gln252 and Thr263 to Glu508. Position 47–54 (Gly47–Ser54) interacts with ATP.

This sequence belongs to the ABC transporter superfamily. Carbohydrate importer 2 (CUT2) (TC 3.A.1.2) family.

It localises to the cell inner membrane. It carries out the reaction D-ribose(out) + ATP + H2O = D-ribose(in) + ADP + phosphate + H(+). The enzyme catalyses D-galactose(out) + ATP + H2O = D-galactose(in) + ADP + phosphate + H(+). Part of an ABC transporter complex involved in carbohydrate import. Could be involved in ribose, galactose and/or methyl galactoside import. Responsible for energy coupling to the transport system. This is Putative ribose/galactose/methyl galactoside import ATP-binding protein 3 from Burkholderia ambifaria (strain ATCC BAA-244 / DSM 16087 / CCUG 44356 / LMG 19182 / AMMD) (Burkholderia cepacia (strain AMMD)).